A 96-amino-acid chain; its full sequence is Uteroglobin (96 aa).

Positions 1-21 (MKIAITITVVMLSICCSSASS) are cleaved as a signal peptide.

The protein belongs to the secretoglobin family. As to quaternary structure, antiparallel homodimer; disulfide-linked. Interaction with LMBR1L is controversial. Club cells (nonciliated cells of the surface epithelium of the pulmonary airways).

The protein localises to the secreted. Its function is as follows. Binds phosphatidylcholine, phosphatidylinositol, polychlorinated biphenyls (PCB) and weakly progesterone, potent inhibitor of phospholipase A2. In Mus musculus (Mouse), this protein is Uteroglobin (Scgb1a1).